Here is an 85-residue protein sequence, read N- to C-terminus: MAETPSSPAPAAKAPPALKKGALVRVNRAAYEGSVEAGASDPHPPAYIFEGPGELLVVKGTYGQVRWRRPVPDVWLRMDQLEAFS.

It belongs to the complex I NdhO subunit family. As to quaternary structure, NDH-1 can be composed of about 15 different subunits; different subcomplexes with different compositions have been identified which probably have different functions.

Its subcellular location is the cellular thylakoid membrane. It catalyses the reaction a plastoquinone + NADH + (n+1) H(+)(in) = a plastoquinol + NAD(+) + n H(+)(out). The enzyme catalyses a plastoquinone + NADPH + (n+1) H(+)(in) = a plastoquinol + NADP(+) + n H(+)(out). Functionally, NDH-1 shuttles electrons from an unknown electron donor, via FMN and iron-sulfur (Fe-S) centers, to quinones in the respiratory and/or the photosynthetic chain. The immediate electron acceptor for the enzyme in this species is believed to be plastoquinone. Couples the redox reaction to proton translocation, and thus conserves the redox energy in a proton gradient. Cyanobacterial NDH-1 also plays a role in inorganic carbon-concentration. The protein is NAD(P)H-quinone oxidoreductase subunit O of Synechococcus sp. (strain WH7803).